A 549-amino-acid chain; its full sequence is Teichoic acids export ATP-binding protein TagH (549 aa).

The ABC transporter domain occupies 22–243 (DKLKDLFRKQ…YRAFLKEYNQ (222 aa)). Residue 57 to 64 (GLNGSGKS) coordinates ATP. Residues 244–549 (MSMEDRKKFQ…EIQSISIVKK (306 aa)) are unknown. The SH3b domain maps to 346 to 415 (ENMYMVKSNG…VSTKFIEPFK (70 aa)).

The protein belongs to the ABC transporter superfamily. Teichoic acids exporter (TC 3.A.1.104.1) family. In terms of assembly, the complex is composed of two ATP-binding proteins (TagH) and two transmembrane proteins (TagG).

The protein resides in the cell membrane. It catalyses the reaction ATP + H2O + teichoic acidSide 1 = ADP + phosphate + teichoic acidSide 2.. Its function is as follows. Part of the ABC transporter complex TagGH involved in teichoic acids export. Responsible for energy coupling to the transport system. This is Teichoic acids export ATP-binding protein TagH from Bacillus cereus (strain ZK / E33L).